The chain runs to 1364 residues: Collagen alpha-2(I) chain (1364 aa).

Residues 1–22 (MLSFVDTRTLLLLAVTSCLATC) form the signal peptide. The residue at position 23 (Gln-23) is a Pyrrolidone carboxylic acid. Residues 23 to 79 (QSLQEATARKGPSGDRGPRGERGPPGPPGRDGDDGIPGPPGPPGPPGPPGLGGNFAA) constitute a propeptide, N-terminal propeptide. The disordered stretch occupies residues 26–1128 (QEATARKGPS…QPRSPTSLRP (1103 aa)). Positions 34–44 (PSGDRGPRGER) are enriched in basic and acidic residues. A compositionally biased stretch (pro residues) spans 59–71 (PGPPGPPGPPGPP). At Gln-80 the chain carries Pyrrolidone carboxylic acid. At Lys-84 the chain carries Allysine. Low complexity predominate over residues 93-130 (LMGPRGPPGASGAPGPQGFQGPPGEPGEPGQTGPAGAR). Residues Pro-100, Pro-106, Pro-115, Pro-118, Pro-121, Pro-133, Pro-136, Pro-145, Pro-151, Pro-166, Pro-169, and Pro-172 each carry the 4-hydroxyproline modification. The span at 139 to 153 (AGEDGHPGKPGRPGE) shows a compositional bias: basic and acidic residues. Lys-175 bears the 5-hydroxylysine; alternate mark. The O-linked (Gal...) hydroxylysine; alternate glycan is linked to Lys-175. 4-hydroxyproline occurs at positions 190 and 193. Lys-196 carries the 5-hydroxylysine modification. Pro-199, Pro-202, Pro-208, Pro-217, Pro-226, Pro-253, Pro-256, and Pro-259 each carry 4-hydroxyproline. Residues 223 to 252 (VGAPGPAGARGSDGSVGPVGPAGPIGSAGP) are compositionally biased toward low complexity. Residue Lys-262 is modified to 5-hydroxylysine. Residues Pro-271, Pro-286, Pro-295, and Pro-304 each carry the 4-hydroxyproline modification. Residues 277 to 291 (AGPRGEVGLPGLSGP) show a composition bias toward low complexity. The segment covering 298–319 (PGANGLPGAKGAAGLPGVAGAP) has biased composition (low complexity). A 5-hydroxylysine modification is found at Lys-307. 4-hydroxyproline is present on residues Pro-313, Pro-319, Pro-322, Pro-328, and Pro-346. Residues 328-343 (PGPVGAAGATGARGLV) are compositionally biased toward low complexity. Position 352 is a 5-hydroxylysine (Lys-352). Residues Pro-361, Pro-367, Pro-370, Pro-391, Pro-394, Pro-400, Pro-406, Pro-439, and Pro-442 each carry the 4-hydroxyproline modification. Low complexity predominate over residues 396–406 (LRGNPGSRGLP). Low complexity-rich tracts occupy residues 468–487 (LPGI…RGEP) and 511–535 (AGLA…PGLQ). A compositionally biased stretch (gly residues) spans 536–545 (GVQGGKGEQG). Low complexity-rich tracts occupy residues 592–609 (PGES…SRGP), 621–643 (EPGV…PGER), 666–688 (SPGR…AGAN), and 715–735 (VGPA…QPGA). Residues 736 to 745 (KGERGTKGPK) are compositionally biased toward basic and acidic residues. Residues 748–763 (NGPVGPTGPVGAAGPS) show a composition bias toward low complexity. Residues 773–782 (GSRGDGGPPG) show a composition bias toward gly residues. Low complexity-rich tracts occupy residues 783 to 793 (ATGFPGAAGRT), 861 to 874 (PQGL…LGLP), 891 to 930 (EPGP…NPGN), 948 to 961 (YPGN…AGAP), and 978 to 999 (EPGP…PSGP). Residues 1003-1014 (RGDKGEPGDKGP) show a composition bias toward basic and acidic residues. The segment covering 1087-1101 (AGPPGPPGPPGPPGP) has biased composition (pro residues). Positions 1118–1364 (DQPRSPTSLR…RLNIGPVCFK (247 aa)) are cleaved as a propeptide — C-terminal propeptide. The Fibrillar collagen NC1 domain maps to 1131 to 1364 (YEVDATLKSL…RLNIGPVCFK (234 aa)). Disulfide bonds link Cys-1161–Cys-1193, Cys-1201–Cys-1362, and Cys-1270–Cys-1315. Asp-1179, Asn-1181, Gln-1182, Cys-1184, and Asp-1187 together coordinate Ca(2+). N-linked (GlcNAc...) asparagine glycosylation is present at Asn-1265.

It belongs to the fibrillar collagen family. Trimers of one alpha 2(I) and two alpha 1(I) chains. Interacts (via C-terminus) with TMEM131 (via PapD-L domain); the interaction is direct and is involved in assembly and TRAPPIII ER-to-Golgi transport complex-dependent secretion of collagen. In terms of processing, prolines at the third position of the tripeptide repeating unit (G-X-Y) are hydroxylated in some or all of the chains. As to expression, forms the fibrils of tendon, ligaments and bones. In bones the fibrils are mineralized with calcium hydroxyapatite.

Its subcellular location is the secreted. The protein localises to the extracellular space. It is found in the extracellular matrix. Functionally, type I collagen is a member of group I collagen (fibrillar forming collagen). This chain is Collagen alpha-2(I) chain (COL1A2), found in Bos taurus (Bovine).